The primary structure comprises 457 residues: Siroheme synthase 2 (457 aa).

The tract at residues 1-204 (MDHLPIFCQL…DDRQAVADTT (204 aa)) is precorrin-2 dehydrogenase /sirohydrochlorin ferrochelatase. NAD(+) contacts are provided by residues 22–23 (DV) and 43–44 (LD). Serine 128 is subject to Phosphoserine. Residues 216 to 457 (GEVVLVGAGP…RDKLNWFSNH (242 aa)) form a uroporphyrinogen-III C-methyltransferase region. Proline 225 provides a ligand contact to S-adenosyl-L-methionine. The Proton acceptor role is filled by aspartate 248. Lysine 270 acts as the Proton donor in catalysis. Residues 301-303 (GGD), isoleucine 306, 331-332 (TA), methionine 382, and glycine 411 contribute to the S-adenosyl-L-methionine site.

In the N-terminal section; belongs to the precorrin-2 dehydrogenase / sirohydrochlorin ferrochelatase family. It in the C-terminal section; belongs to the precorrin methyltransferase family.

It catalyses the reaction uroporphyrinogen III + 2 S-adenosyl-L-methionine = precorrin-2 + 2 S-adenosyl-L-homocysteine + H(+). The enzyme catalyses precorrin-2 + NAD(+) = sirohydrochlorin + NADH + 2 H(+). The catalysed reaction is siroheme + 2 H(+) = sirohydrochlorin + Fe(2+). Its pathway is cofactor biosynthesis; adenosylcobalamin biosynthesis; precorrin-2 from uroporphyrinogen III: step 1/1. The protein operates within cofactor biosynthesis; adenosylcobalamin biosynthesis; sirohydrochlorin from precorrin-2: step 1/1. It functions in the pathway porphyrin-containing compound metabolism; siroheme biosynthesis; precorrin-2 from uroporphyrinogen III: step 1/1. It participates in porphyrin-containing compound metabolism; siroheme biosynthesis; siroheme from sirohydrochlorin: step 1/1. Its pathway is porphyrin-containing compound metabolism; siroheme biosynthesis; sirohydrochlorin from precorrin-2: step 1/1. Multifunctional enzyme that catalyzes the SAM-dependent methylations of uroporphyrinogen III at position C-2 and C-7 to form precorrin-2 via precorrin-1. Then it catalyzes the NAD-dependent ring dehydrogenation of precorrin-2 to yield sirohydrochlorin. Finally, it catalyzes the ferrochelation of sirohydrochlorin to yield siroheme. This chain is Siroheme synthase 2, found in Klebsiella pneumoniae subsp. pneumoniae (strain ATCC 700721 / MGH 78578).